The chain runs to 95 residues: ESAT-6-like protein EsxA (95 aa).

Belongs to the WXG100 family. ESAT-6 subfamily. Forms a tight 1:1 complex with EsxB. An artificial EsxA-EsxB heterodimer interacts with EspA.

The protein resides in the secreted. An exported protein. Unlike its M.tuberculosis counterpart has poor pore forming ability in artificial liposomes, does not undergo conformational change at acidic pH. Mutation of 2 residues to those found in M.tuberculosis (25-TA-26 to IH) alters the properties of this protein so that it inserts into liposomes at acidic pH, forming pores, like its M.tuberculosis counterpart. The polypeptide is ESAT-6-like protein EsxA (Mycolicibacterium smegmatis (strain ATCC 700084 / mc(2)155) (Mycobacterium smegmatis)).